An 81-amino-acid chain; its full sequence is Small ribosomal subunit protein bS16 (81 aa).

This sequence belongs to the bacterial ribosomal protein bS16 family.

The chain is Small ribosomal subunit protein bS16 from Phytoplasma mali (strain AT).